The sequence spans 341 residues: Methionine import ATP-binding protein MetN 3 (341 aa).

Positions 2 to 241 constitute an ABC transporter domain; that stretch reads ILLENVKKIY…PKQDITKRFV (240 aa). Residue 38–45 coordinates ATP; sequence GYSGAGKS.

This sequence belongs to the ABC transporter superfamily. Methionine importer (TC 3.A.1.24) family. In terms of assembly, the complex is composed of two ATP-binding proteins (MetN), two transmembrane proteins (MetI) and a solute-binding protein (MetQ).

It is found in the cell membrane. It carries out the reaction L-methionine(out) + ATP + H2O = L-methionine(in) + ADP + phosphate + H(+). The enzyme catalyses D-methionine(out) + ATP + H2O = D-methionine(in) + ADP + phosphate + H(+). Its function is as follows. Part of the ABC transporter complex MetNIQ involved in methionine import. Responsible for energy coupling to the transport system. This Bacillus cereus (strain ATCC 14579 / DSM 31 / CCUG 7414 / JCM 2152 / NBRC 15305 / NCIMB 9373 / NCTC 2599 / NRRL B-3711) protein is Methionine import ATP-binding protein MetN 3.